Reading from the N-terminus, the 868-residue chain is Dolichyl-phosphooligosaccharide-protein glycotransferase 3 (868 aa).

The Cytoplasmic segment spans residues 1–16; that stretch reads MQNAESWFKKYWHLSV. A helical transmembrane segment spans residues 17–36; it reads LVIAALISVKLRILNPWNSV. Residues 37–101 lie on the Extracellular side of the membrane; sequence FTWTVRLGGN…IAGIIFSATS (65 aa). The DXD motif 1 signature appears at 45–47; that stretch reads GND. Aspartate 47 contacts Mn(2+). Histidine 81 is a binding site for a glycophospholipid. The helical transmembrane segment at 102-131 threads the bilayer; it reads GESLRAVLAFIPAIGGVLAILPVYLLTREV. Residues 132–133 are Cytoplasmic-facing; that stretch reads FD. Residues 134–153 form a helical membrane-spanning segment; the sequence is KRAAVIAAFLIAIVPGQFLQ. Topologically, residues 154-162 are extracellular; that stretch reads RSILGFNDH. Aspartate 161 contributes to the Mn(2+) binding site. A DXD motif 2 motif is present at residues 161 to 163; it reads DHH. An a glycophospholipid-binding site is contributed by histidine 162. Residue histidine 163 participates in Mn(2+) binding. The chain crosses the membrane as a helical span at residues 163-184; sequence HIWEAFWQVSALGTFLLAYNRW. At 185-199 the chain is on the cytoplasmic side; it reads KGHDLSHNLTARQMA. A helical transmembrane segment spans residues 200-212; the sequence is YPVIAGITIGLYV. Topologically, residues 213 to 215 are extracellular; the sequence is LSW. Residues 216-238 form a helical membrane-spanning segment; the sequence is GAGFIIAPIILAFMFFAFVLAGF. Topologically, residues 239 to 241 are cytoplasmic; sequence VNA. Residues 242–262 traverse the membrane as a helical segment; it reads DRKNLSLVAVVTFAVSALIYL. Over 263 to 279 the chain is Extracellular; the sequence is PFAFNYPGFSTIFYSPF. Residues 280 to 303 form a helical membrane-spanning segment; the sequence is QLLVLLGSAVIAAAFYQIEKWNDV. Residues 304–312 lie on the Cytoplasmic side of the membrane; the sequence is GFFERVGLG. The chain crosses the membrane as a helical span at residues 313–330; sequence RKGMPLAVIVLTALIMGL. The Extracellular segment spans residues 331–373; sequence FFVISPDFARNLLSVVRVVQPKGGALTIAEVYPFFFTHNGEFT. Residues 357-360 carry the TIXE motif motif; the sequence is TIAE. Residues 374-396 form a helical membrane-spanning segment; the sequence is LTNAVLHFGALFFFGMAGILYSA. The Cytoplasmic segment spans residues 397–404; sequence YRFLKRRS. A helical transmembrane segment spans residues 405–423; that stretch reads FPEMALLIWAIAMFIALWG. The Extracellular portion of the chain corresponds to 424-427; that stretch reads QNRF. Arginine 426 contributes to the a glycophospholipid binding site. A helical membrane pass occupies residues 428-452; the sequence is AYYFAAVSAVYSALALSVVFDKLHL. Residues 453–468 lie on the Cytoplasmic side of the membrane; sequence YRALENAIGARNKLSY. The chain crosses the membrane as a helical span at residues 469 to 494; sequence FRVAFALLIALAAIYPTYILADAQSS. At 495–868 the chain is on the extracellular side; the sequence is YAGGPNKQWY…QNGEIIQLDL (374 aa). The interacts with target acceptor peptide in protein substrate stretch occupies residues 550 to 552; that stretch reads WWD. The WWDYG motif signature appears at 550–554; that stretch reads WWDYG. A DKi motif motif is present at residues 613-622; the sequence is EMETGKYYAM.

It belongs to the STT3 family. Mg(2+) serves as cofactor. Requires Mn(2+) as cofactor. It depends on Zn(2+) as a cofactor.

It localises to the cell membrane. It catalyses the reaction an archaeal dolichyl phosphooligosaccharide + [protein]-L-asparagine = an archaeal dolichyl phosphate + a glycoprotein with the oligosaccharide chain attached by N-beta-D-glycosyl linkage to a protein L-asparagine.. It participates in protein modification; protein glycosylation. Its function is as follows. Oligosaccharyl transferase (OST) that catalyzes the initial transfer of a defined glycan (a glucose-linked heptasaccharide composed of 3 Glc, 2 Man, 2 Gal and a sulfate for A.fulgidus AglB-L) from the lipid carrier dolichol-monophosphate to an asparagine residue within an Asn-X-Ser/Thr consensus motif in nascent polypeptide chains, the first step in protein N-glycosylation. This is Dolichyl-phosphooligosaccharide-protein glycotransferase 3 (aglB3) from Archaeoglobus fulgidus (strain ATCC 49558 / DSM 4304 / JCM 9628 / NBRC 100126 / VC-16).